A 549-amino-acid chain; its full sequence is Glucose-6-phosphate isomerase (549 aa).

E353 functions as the Proton donor in the catalytic mechanism. Active-site residues include H384 and K513.

It belongs to the GPI family.

Its subcellular location is the cytoplasm. The enzyme catalyses alpha-D-glucose 6-phosphate = beta-D-fructose 6-phosphate. It participates in carbohydrate biosynthesis; gluconeogenesis. It functions in the pathway carbohydrate degradation; glycolysis; D-glyceraldehyde 3-phosphate and glycerone phosphate from D-glucose: step 2/4. Its function is as follows. Catalyzes the reversible isomerization of glucose-6-phosphate to fructose-6-phosphate. The sequence is that of Glucose-6-phosphate isomerase from Brucella melitensis biotype 2 (strain ATCC 23457).